The primary structure comprises 203 residues: SPbeta prophage-derived uncharacterized lipoprotein YonS (203 aa).

A signal peptide spans 1–21 (MKLFKKLGILLLITSLILLAA). Cys22 carries N-palmitoyl cysteine lipidation. The S-diacylglycerol cysteine moiety is linked to residue Cys22. A compositionally biased stretch (low complexity) spans 27–46 (ESSSSSEDTNNATDTNTSES). The tract at residues 27–57 (ESSSSSEDTNNATDTNTSESQDISVNGPEKV) is disordered.

The protein resides in the cell membrane. The protein is SPbeta prophage-derived uncharacterized lipoprotein YonS (yonS) of Bacillus subtilis (strain 168).